The primary structure comprises 828 residues: Periplasmic nitrate reductase (828 aa).

A signal peptide (tat-type signal) is located at residues 1–31 (MKLSRRSFMKANAVAAAAAAAGLSVPGVARA). In terms of domain architecture, 4Fe-4S Mo/W bis-MGD-type spans 39-95 (IKWDKAPCRFCGTGCGVLVGTQQGRVVACQGDPDAPVNRGLNCIKGYFLPKIMYGKD). Positions 46, 49, 53, and 81 each coordinate [4Fe-4S] cluster. Mo-bis(molybdopterin guanine dinucleotide) is bound by residues Lys-83, Gln-150, Asn-175, Cys-179, 212–219 (WGANMAEM), 243–247 (STYQH), 262–264 (QSD), Met-372, Gln-376, Asn-482, 508–509 (SD), Lys-531, Asp-558, and 718–727 (TGRVLEHWHT). Residue Phe-794 participates in substrate binding. The Mo-bis(molybdopterin guanine dinucleotide) site is built by Asn-802 and Lys-819.

The protein belongs to the prokaryotic molybdopterin-containing oxidoreductase family. NasA/NapA/NarB subfamily. As to quaternary structure, component of the periplasmic nitrate reductase NapAB complex composed of NapA and NapB. It depends on [4Fe-4S] cluster as a cofactor. Mo-bis(molybdopterin guanine dinucleotide) serves as cofactor. Post-translationally, predicted to be exported by the Tat system. The position of the signal peptide cleavage has not been experimentally proven.

The protein localises to the periplasm. It catalyses the reaction 2 Fe(II)-[cytochrome] + nitrate + 2 H(+) = 2 Fe(III)-[cytochrome] + nitrite + H2O. Its function is as follows. Catalytic subunit of the periplasmic nitrate reductase complex NapAB. Receives electrons from NapB and catalyzes the reduction of nitrate to nitrite. The sequence is that of Periplasmic nitrate reductase from Escherichia coli O7:K1 (strain IAI39 / ExPEC).